A 339-amino-acid polypeptide reads, in one-letter code: Glycerol-3-phosphate dehydrogenase [NAD(P)+] (339 aa).

NADPH contacts are provided by S15, Y16, H36, and K110. 3 residues coordinate sn-glycerol 3-phosphate: K110, G139, and T141. A143 provides a ligand contact to NADPH. Residues K195, D248, S258, R259, and N260 each contribute to the sn-glycerol 3-phosphate site. The Proton acceptor role is filled by K195. R259 is an NADPH binding site. The NADPH site is built by V283 and E285.

This sequence belongs to the NAD-dependent glycerol-3-phosphate dehydrogenase family.

The protein localises to the cytoplasm. The enzyme catalyses sn-glycerol 3-phosphate + NAD(+) = dihydroxyacetone phosphate + NADH + H(+). It carries out the reaction sn-glycerol 3-phosphate + NADP(+) = dihydroxyacetone phosphate + NADPH + H(+). It functions in the pathway membrane lipid metabolism; glycerophospholipid metabolism. In terms of biological role, catalyzes the reduction of the glycolytic intermediate dihydroxyacetone phosphate (DHAP) to sn-glycerol 3-phosphate (G3P), the key precursor for phospholipid synthesis. The sequence is that of Glycerol-3-phosphate dehydrogenase [NAD(P)+] from Salmonella agona (strain SL483).